A 92-amino-acid polypeptide reads, in one-letter code: MTKGTSSFGKRRNKTHTLCRRCGRSSYHIQKSKCAQCGYPAAKLRSYHWSVKAKRRKTTGTGRMRHLKIVRRRFRNGFKEGKPTPKKAVASS.

Residues C19, C22, C34, and C37 each contribute to the Zn(2+) site. The C4-type zinc finger occupies 19–37 (CRRCGRSSYHIQKSKCAQC).

Belongs to the eukaryotic ribosomal protein eL37 family. Requires Zn(2+) as cofactor.

Its function is as follows. Binds to the 23S rRNA. This chain is Large ribosomal subunit protein eL37 (RpL37), found in Spodoptera frugiperda (Fall armyworm).